A 410-amino-acid polypeptide reads, in one-letter code: Peptidase T (410 aa).

Residue histidine 79 participates in Zn(2+) binding. Aspartate 81 is a catalytic residue. Residue aspartate 142 coordinates Zn(2+). Glutamate 176 (proton acceptor) is an active-site residue. Residues glutamate 177, aspartate 199, and histidine 381 each contribute to the Zn(2+) site.

It belongs to the peptidase M20B family. Zn(2+) serves as cofactor.

It is found in the cytoplasm. The enzyme catalyses Release of the N-terminal residue from a tripeptide.. Its function is as follows. Cleaves the N-terminal amino acid of tripeptides. The chain is Peptidase T from Bacillus thuringiensis subsp. konkukian (strain 97-27).